The following is a 525-amino-acid chain: Lysine--tRNA ligase (525 aa).

Mg(2+) is bound by residues E430 and E437.

The protein belongs to the class-II aminoacyl-tRNA synthetase family. As to quaternary structure, homodimer. The cofactor is Mg(2+).

Its subcellular location is the cytoplasm. It carries out the reaction tRNA(Lys) + L-lysine + ATP = L-lysyl-tRNA(Lys) + AMP + diphosphate. The chain is Lysine--tRNA ligase from Chlamydia caviae (strain ATCC VR-813 / DSM 19441 / 03DC25 / GPIC) (Chlamydophila caviae).